The following is a 614-amino-acid chain: NEDD8 ultimate buster 1 (614 aa).

Coiled coils occupy residues 36 to 71 (LAVK…IERG) and 151 to 206 (NVKA…MVVD). 3 UBA domains span residues 373 to 413 (YIDP…ISNR), 423 to 469 (EEKE…LLSN), and 488 to 528 (SPSQ…LAHH). The short motif at 413 to 430 (RREELAQIRKEEKEKRRR) is the Nuclear localization signal element. An NEDD8-binding 1 region spans residues 426-473 (EKRRRRLENVNTLRGMGYSTQAAKQALHQARGNLDDALKVLLSNPHMW). Residues 531–590 (SLPPDLQFSGEDSSPTPSTSPSDSAGTSSASTDEDMETEAVNEILEDIPEHEEDYLDSTL) form a disordered region. Residues 539 to 561 (SGEDSSPTPSTSPSDSAGTSSAS) show a composition bias toward low complexity. The segment at 549-597 (TSPSDSAGTSSASTDEDMETEAVNEILEDIPEHEEDYLDSTLEDEEVII) is NEDD8-binding 2. A compositionally biased stretch (acidic residues) spans 562–590 (TDEDMETEAVNEILEDIPEHEEDYLDSTL).

In terms of assembly, directly interacts with NEDD8 and PSMD4/S5a, a member of the regulatory subunit of the 26S proteasome. Interacts with AIPL1. The interaction with UBD via UBA domains facilitates the linking of UBD-conjugated target protein to the proteasome complex and accelerates UBD degradation and that of its conjugates.

It localises to the nucleus. Specific down-regulator of the NEDD8 conjugation system. Recruits NEDD8, UBD, and their conjugates to the proteasome for degradation. The protein is NEDD8 ultimate buster 1 (Nub1) of Mus musculus (Mouse).